Reading from the N-terminus, the 201-residue chain is ATP-dependent Clp protease proteolytic subunit (201 aa).

Catalysis depends on Ser101, which acts as the Nucleophile. The active site involves His126.

This sequence belongs to the peptidase S14 family. As to quaternary structure, component of the chloroplastic Clp protease core complex.

Its subcellular location is the plastid. It localises to the chloroplast stroma. It catalyses the reaction Hydrolysis of proteins to small peptides in the presence of ATP and magnesium. alpha-casein is the usual test substrate. In the absence of ATP, only oligopeptides shorter than five residues are hydrolyzed (such as succinyl-Leu-Tyr-|-NHMec, and Leu-Tyr-Leu-|-Tyr-Trp, in which cleavage of the -Tyr-|-Leu- and -Tyr-|-Trp bonds also occurs).. Its function is as follows. Cleaves peptides in various proteins in a process that requires ATP hydrolysis. Has a chymotrypsin-like activity. Plays a major role in the degradation of misfolded proteins. The chain is ATP-dependent Clp protease proteolytic subunit from Chaetosphaeridium globosum (Charophycean green alga).